A 99-amino-acid chain; its full sequence is MSLKSWKEIPIGGVIDKPGTAREYKTGAWRVMRPILHKEKCIDCMFCWLYCPDQAIIQEGGIMKGFNYDYCKGCGLCANVCPKQAIEMRPETEFLSEEG.

4Fe-4S ferredoxin-type domains follow at residues 32–60 (MRPILHKEKCIDCMFCWLYCPDQAIIQEG) and 61–91 (GIMKGFNYDYCKGCGLCANVCPKQAIEMRPE). Residues C41, C44, C47, C51, C71, C74, C77, and C81 each coordinate [4Fe-4S] cluster.

As to quaternary structure, heterotetramer of one alpha, one beta, one delta and one gamma chain. Requires [4Fe-4S] cluster as cofactor.

This is Pyruvate synthase subunit PorD (porD) from Thermotoga maritima (strain ATCC 43589 / DSM 3109 / JCM 10099 / NBRC 100826 / MSB8).